Reading from the N-terminus, the 329-residue chain is RNA-binding protein CP33, chloroplastic (329 aa).

Residues 1–69 (MSSAYCSSAV…NIRRHRFFCA (69 aa)) constitute a chloroplast transit peptide. A compositionally biased stretch (acidic residues) spans 77–104 (ADDEIQASVEEEEEVEEEGDEGEEEVEE). Disordered regions lie at residues 77-117 (ADDE…EEGR) and 296-329 (SERE…NVSA). 2 consecutive RRM domains span residues 116-194 (GRLY…FPEV) and 219-297 (HKVY…LASE).

The protein localises to the plastid. It localises to the chloroplast. In terms of biological role, could be involved in splicing and/or processing of chloroplast RNAs. This chain is RNA-binding protein CP33, chloroplastic, found in Arabidopsis thaliana (Mouse-ear cress).